Consider the following 567-residue polypeptide: DNA ligase B (567 aa).

K132 functions as the N6-AMP-lysine intermediate in the catalytic mechanism.

The protein belongs to the NAD-dependent DNA ligase family. LigB subfamily.

The catalysed reaction is NAD(+) + (deoxyribonucleotide)n-3'-hydroxyl + 5'-phospho-(deoxyribonucleotide)m = (deoxyribonucleotide)n+m + AMP + beta-nicotinamide D-nucleotide.. Catalyzes the formation of phosphodiester linkages between 5'-phosphoryl and 3'-hydroxyl groups in double-stranded DNA using NAD as a coenzyme and as the energy source for the reaction. The polypeptide is DNA ligase B (Yersinia pseudotuberculosis serotype O:1b (strain IP 31758)).